The sequence spans 530 residues: MENDVKENLEEEEDRLLPPPPPSQSLPSTDSESEAAFETNEKILIVDFESPDDPTTGDTPPPFSWRKLWLFTGPGFLMSIAFLDPGNLEGDLQAGAIAGYSLLWLLMWATAMGLLIQMLSARVGVATGRHLAELCRDEYPTWARYVLWSMAELALIGADIQEVIGSAIAIQILSRGFLPLWAGVVITASDCFLFLFLENYGVRKLEAVFAVLIATMGLSFAWMFGETKPSGKELMIGILLPRLSSKTIRQAVGVVGCVIMPHNVFLHSALVQSRKIDPKRKSRVQEALNYYLIESSVALFISFMINLFVTTVFAKGFYGTEKANNIGLVNAGQYLQEKFGGGLLPILYIWGIGLLAAGQSSTITGTYAGQFIMGGFLNLRLKKWMRAVITRSCAIVPTMIVAIVFNTSEASLDVLNEWLNVLQSVQIPFALLPLLTLVSKEEIMGDFKIGPILQRIAWTVAALVMIINGYLLLDFFVSEVDGFLFGVTVCVWTTAYIAFIVYLISHSNFFPSPWSSSSIELPKRVSVSNS.

Positions Met-1–Ala-35 are disordered. The next 12 membrane-spanning stretches (helical) occupy residues Leu-68–Leu-88, Ala-96–Ile-116, Leu-153–Leu-173, Phe-177–Leu-197, Leu-205–Gly-225, Ala-251–Val-271, Val-297–Phe-317, Phe-339–Gln-359, Ile-395–Leu-415, Trp-418–Val-438, Ile-456–Phe-476, and Leu-484–Ile-504.

The protein belongs to the NRAMP (TC 2.A.55) family.

The protein resides in the membrane. In terms of biological role, seems to be involved in iron uptake. This is Metal transporter Nramp2 (NRAMP2) from Arabidopsis thaliana (Mouse-ear cress).